The following is a 1063-amino-acid chain: Cation efflux system protein CzcA (1063 aa).

The next 10 membrane-spanning stretches (helical) occupy residues 14-29, 350-370, 452-472, 487-507, 534-554, 883-903, 906-926, 937-957, 982-1004, and 1013-1033; these read WLVLLAVFGMAGLGIF, GAVLVIVILFLFLGNIRAALI, LIFGQLIIMIVYLPIFALTGV, ALLGAMILSVTFVPAAVALFI, LANTAVVLTFAAVSIVLCVAI, VVVPVALLLVFVLLFAMFNNI, GLLVFTGIPFALTGGILALWI, VGFIALCGVAVLNGLVMLSFI, VLMTALVASLGFVPMAIATGTGA, and VVIGGILSSTALTLLVLPVLY. The tract at residues 1040–1063 is disordered; that stretch reads DEDAEDTREPVTQTHQPDQGRQPA. A compositionally biased stretch (polar residues) spans 1049 to 1063; it reads PVTQTHQPDQGRQPA.

It belongs to the resistance-nodulation-cell division (RND) (TC 2.A.6) family.

The protein resides in the cell membrane. Its function is as follows. Has a low cation transport activity for cobalt, it is essential for the expression of cobalt, zinc, and cadmium resistance. CzcA and CzcB together would act in zinc efflux nearly as effectively as the complete CZC efflux system (CzcABC). This is Cation efflux system protein CzcA (czcA) from Alcaligenes sp. (strain CT14).